A 308-amino-acid polypeptide reads, in one-letter code: Ornithine carbamoyltransferase (308 aa).

Residues 51–54 (STRT), glutamine 78, arginine 102, and 129–132 (HPTQ) contribute to the carbamoyl phosphate site. Residues asparagine 160, aspartate 224, and 228 to 229 (SM) contribute to the L-ornithine site. Carbamoyl phosphate is bound by residues 264-265 (CL) and arginine 292.

The protein belongs to the aspartate/ornithine carbamoyltransferase superfamily. OTCase family.

It is found in the cytoplasm. It carries out the reaction carbamoyl phosphate + L-ornithine = L-citrulline + phosphate + H(+). The protein operates within amino-acid biosynthesis; L-arginine biosynthesis; L-arginine from L-ornithine and carbamoyl phosphate: step 1/3. Functionally, reversibly catalyzes the transfer of the carbamoyl group from carbamoyl phosphate (CP) to the N(epsilon) atom of ornithine (ORN) to produce L-citrulline. The polypeptide is Ornithine carbamoyltransferase (Caldicellulosiruptor saccharolyticus (strain ATCC 43494 / DSM 8903 / Tp8T 6331)).